Here is a 242-residue protein sequence, read N- to C-terminus: tRNA (guanine-N(1)-)-methyltransferase (242 aa).

Residues Gly-111 and 130-135 (IGDYVL) each bind S-adenosyl-L-methionine.

It belongs to the RNA methyltransferase TrmD family. As to quaternary structure, homodimer.

It localises to the cytoplasm. The enzyme catalyses guanosine(37) in tRNA + S-adenosyl-L-methionine = N(1)-methylguanosine(37) in tRNA + S-adenosyl-L-homocysteine + H(+). Specifically methylates guanosine-37 in various tRNAs. The protein is tRNA (guanine-N(1)-)-methyltransferase of Aster yellows witches'-broom phytoplasma (strain AYWB).